A 302-amino-acid polypeptide reads, in one-letter code: Cardiolipin synthase (CMP-forming) (302 aa).

The disordered stretch occupies residues 65 to 84 (PRTHCSGAGKAAPEPAAGGD). The span at 71–84 (GAGKAAPEPAAGGD) shows a compositional bias: low complexity. The next 5 helical transmembrane spans lie at 109–129 (IPNL…YLIL), 133–153 (FNVA…DGFI), 190–212 (IPVP…VFYV), 250–270 (LILV…SIYL), and 271–289 (QILW…YSYY).

The protein belongs to the CDP-alcohol phosphatidyltransferase class-I family. The cofactor is a divalent metal cation.

It is found in the mitochondrion inner membrane. It carries out the reaction a CDP-1,2-diacyl-sn-glycerol + a 1,2-diacyl-sn-glycero-3-phospho-(1'-sn-glycerol) = a cardiolipin + CMP + H(+). Its function is as follows. Catalyzes the synthesis of cardiolipin (CL) (diphosphatidylglycerol) by specifically transferring a phosphatidyl group from CDP-diacylglycerol to phosphatidylglycerol (PG). CL is a key phospholipid in mitochondrial membranes and plays important roles in maintaining the functional integrity and dynamics of mitochondria under both optimal and stress conditions. The polypeptide is Cardiolipin synthase (CMP-forming) (Crls1) (Rattus norvegicus (Rat)).